Here is a 727-residue protein sequence, read N- to C-terminus: Long-chain-fatty-acid--[acyl-carrier-protein] ligase AEE15, chloroplastic (727 aa).

The N-terminal 66 residues, 1–66 (MQIRLKPDYS…PSFRRFRVHC (66 aa)), are a transit peptide targeting the chloroplast.

This sequence belongs to the ATP-dependent AMP-binding enzyme family.

It is found in the plastid. The protein localises to the chloroplast. The enzyme catalyses a long-chain fatty acid + holo-[ACP] + ATP = a long-chain fatty acyl-[ACP] + AMP + diphosphate. Probably involved in the activation of fatty acids to acyl-carrier-protein prior to fatty acid elongation in plastids. Acts on medium- to long-chain fatty acids. This chain is Long-chain-fatty-acid--[acyl-carrier-protein] ligase AEE15, chloroplastic (AAE15), found in Arabidopsis thaliana (Mouse-ear cress).